Here is a 342-residue protein sequence, read N- to C-terminus: Small ribosomal subunit protein uS2 (342 aa).

The disordered stretch occupies residues 235-283 (EENAPFEQDEPRKPSQKPKQNRPENKPRFDKQAPRAAAKPEVKAEVKPE). The segment covering 255–283 (NRPENKPRFDKQAPRAAAKPEVKAEVKPE) has biased composition (basic and acidic residues).

The protein belongs to the universal ribosomal protein uS2 family.

The sequence is that of Small ribosomal subunit protein uS2 from Acholeplasma laidlawii (strain PG-8A).